A 589-amino-acid polypeptide reads, in one-letter code: Aspartate--tRNA(Asp/Asn) ligase (589 aa).

An L-aspartate-binding site is contributed by Glu-170. The interval Gln-194–Lys-197 is aspartate. Arg-216 contacts L-aspartate. Residues Arg-216–Glu-218 and Gln-225 contribute to the ATP site. His-448 serves as a coordination point for L-aspartate. Glu-482 lines the ATP pocket. Arg-489 provides a ligand contact to L-aspartate. Residue Gly-534–Arg-537 participates in ATP binding. The tract at residues Pro-563 to Glu-589 is disordered. Residues Gln-575–Glu-589 show a composition bias toward basic and acidic residues.

The protein belongs to the class-II aminoacyl-tRNA synthetase family. Type 1 subfamily. In terms of assembly, homodimer.

The protein localises to the cytoplasm. It catalyses the reaction tRNA(Asx) + L-aspartate + ATP = L-aspartyl-tRNA(Asx) + AMP + diphosphate. Aspartyl-tRNA synthetase with relaxed tRNA specificity since it is able to aspartylate not only its cognate tRNA(Asp) but also tRNA(Asn). Reaction proceeds in two steps: L-aspartate is first activated by ATP to form Asp-AMP and then transferred to the acceptor end of tRNA(Asp/Asn). The protein is Aspartate--tRNA(Asp/Asn) ligase of Mycobacterium leprae (strain Br4923).